The sequence spans 434 residues: MFLDTAKIKVKAGNGGDGMVAFRREKYVPNGGPWGGDGGRGGNVVFVVDEGLRTLMDFRYNRHFKADSGEKGMTKGMHGRGAEDLRVRVPQGTTVRDAETGKVLTDLIEHGQEFIVAHGGRGGRGNIRFATPKNPAPEISENGEPGQERELQLELKILADVGLVGFPSVGKSTLLSVITSAKPKIGAYHFTTIVPNLGMVRTQSGESFAVADLPGLIEGASQGVGLGTQFLRHIERTRVILHIIDMSASEGRDPYEDYLAINKELESYNLRLMERPQIIVANKMDMPESQENLEDFKKKLAENYDEFEELPAIFPISGLTKQGLATLLDATAELLDKTPEFLLYDESDMEEEAYYGFDEEEKAFEISRDDDATWVLSGEKLMKLFNMTNFDRDESVMKFARQLRGMGVDEALRARGAKDGDLVRIGKFEFEFVD.

An Obg domain is found at Met1–Leu158. An OBG-type G domain is found at Ala159–Asp336. GTP is bound by residues Gly165–Ser172, Phe190–Val194, Asp212–Gly215, Asn282–Asp285, and Ser317–Leu319. Residues Ser172 and Thr192 each contribute to the Mg(2+) site. The region spanning Gly356 to Asp434 is the OCT domain.

This sequence belongs to the TRAFAC class OBG-HflX-like GTPase superfamily. OBG GTPase family. In terms of assembly, monomer. It depends on Mg(2+) as a cofactor.

It localises to the cytoplasm. An essential GTPase which binds GTP, GDP and possibly (p)ppGpp with moderate affinity, with high nucleotide exchange rates and a fairly low GTP hydrolysis rate. Plays a role in control of the cell cycle, stress response, ribosome biogenesis and in those bacteria that undergo differentiation, in morphogenesis control. This chain is GTPase Obg, found in Streptococcus pneumoniae serotype 19F (strain G54).